A 1222-amino-acid chain; its full sequence is PAN2-PAN3 deadenylation complex catalytic subunit PAN2 (1222 aa).

2 WD repeats span residues 104 to 143 (PEMTELRCMSFTAQPHKIIVAGLQSAMFIIDVEKGAIVDQ) and 276 to 315 (ANVAFMLGLEVSPSGEALAINDAECSIHLWGSPSKIHFNE). The segment at 316–451 (IGKETEFSDI…GLKINGETKE (136 aa)) is linker. A USP domain is found at 452-821 (DPLLKYSNVE…SPCTLAYQIS (370 aa)). Residues 871–1027 (ALDTEFVDLE…WAVFKEYIQE (157 aa)) enclose the Exonuclease domain. Residues Asp873, Glu875, and Asp982 each contribute to the a divalent metal cation site. The segment at 1035-1067 (TSITTTTNPNIHDANTSTTTTTAITTTPPEGHD) is disordered. The span at 1050 to 1061 (TSTTTTTAITTT) shows a compositional bias: low complexity. Asp1071 contributes to the a divalent metal cation binding site. Disordered stretches follow at residues 1110–1152 (PARY…LSGR) and 1167–1222 (ASVT…SPMR). The segment covering 1119 to 1133 (PNPNNNNINNGVNPN) has biased composition (low complexity). Positions 1134-1144 (GLSTPGSTNPI) are enriched in polar residues. Residues 1180–1191 (NGSMSGSTPSTP) show a composition bias toward low complexity. Positions 1207–1216 (SFGGAKGLTF) are enriched in gly residues.

Belongs to the peptidase C19 family. PAN2 subfamily. Forms a heterotrimer with an asymmetric homodimer of the regulatory subunit PAN3 to form the poly(A)-nuclease (PAN) deadenylation complex. It depends on a divalent metal cation as a cofactor.

The protein resides in the cytoplasm. The enzyme catalyses Exonucleolytic cleavage of poly(A) to 5'-AMP.. With respect to regulation, positively regulated by the regulatory subunit PAN3. Its function is as follows. Catalytic subunit of the poly(A)-nuclease (PAN) deadenylation complex, one of two cytoplasmic mRNA deadenylases involved in mRNA turnover. PAN specifically shortens poly(A) tails of RNA and the activity is stimulated by poly(A)-binding protein PAB1. PAN deadenylation is followed by rapid degradation of the shortened mRNA tails by the CCR4-NOT complex. Deadenylated mRNAs are then degraded by two alternative mechanisms, namely exosome-mediated 3'-5' exonucleolytic degradation, or deadenylation-dependent mRNA decaping and subsequent 5'-3' exonucleolytic degradation by XRN1. May also be involved in post-transcriptional maturation of mRNA poly(A) tails. The sequence is that of PAN2-PAN3 deadenylation complex catalytic subunit PAN2 from Coccidioides immitis (strain RS) (Valley fever fungus).